A 71-amino-acid polypeptide reads, in one-letter code: Translation initiation factor IF-1 (71 aa).

The 71-residue stretch at Met1 to His71 folds into the S1-like domain.

It belongs to the IF-1 family. As to quaternary structure, component of the 30S ribosomal translation pre-initiation complex which assembles on the 30S ribosome in the order IF-2 and IF-3, IF-1 and N-formylmethionyl-tRNA(fMet); mRNA recruitment can occur at any time during PIC assembly.

The protein resides in the cytoplasm. One of the essential components for the initiation of protein synthesis. Stabilizes the binding of IF-2 and IF-3 on the 30S subunit to which N-formylmethionyl-tRNA(fMet) subsequently binds. Helps modulate mRNA selection, yielding the 30S pre-initiation complex (PIC). Upon addition of the 50S ribosomal subunit IF-1, IF-2 and IF-3 are released leaving the mature 70S translation initiation complex. The chain is Translation initiation factor IF-1 from Rickettsia felis (strain ATCC VR-1525 / URRWXCal2) (Rickettsia azadi).